Here is a 119-residue protein sequence, read N- to C-terminus: Large ribosomal subunit protein bL17 (119 aa).

Belongs to the bacterial ribosomal protein bL17 family. In terms of assembly, part of the 50S ribosomal subunit. Contacts protein L32.

In Psychrobacter arcticus (strain DSM 17307 / VKM B-2377 / 273-4), this protein is Large ribosomal subunit protein bL17.